We begin with the raw amino-acid sequence, 46 residues long: Large ribosomal subunit protein bL34c (46 aa).

This sequence belongs to the bacterial ribosomal protein bL34 family.

Its subcellular location is the plastid. It localises to the chloroplast. This Guillardia theta (Cryptophyte) protein is Large ribosomal subunit protein bL34c (rpl34).